The chain runs to 103 residues: Pyrimidine/purine nucleoside phosphorylase (103 aa).

Belongs to the nucleoside phosphorylase PpnP family.

It carries out the reaction a purine D-ribonucleoside + phosphate = a purine nucleobase + alpha-D-ribose 1-phosphate. It catalyses the reaction adenosine + phosphate = alpha-D-ribose 1-phosphate + adenine. The catalysed reaction is cytidine + phosphate = cytosine + alpha-D-ribose 1-phosphate. The enzyme catalyses guanosine + phosphate = alpha-D-ribose 1-phosphate + guanine. It carries out the reaction inosine + phosphate = alpha-D-ribose 1-phosphate + hypoxanthine. It catalyses the reaction thymidine + phosphate = 2-deoxy-alpha-D-ribose 1-phosphate + thymine. The catalysed reaction is uridine + phosphate = alpha-D-ribose 1-phosphate + uracil. The enzyme catalyses xanthosine + phosphate = alpha-D-ribose 1-phosphate + xanthine. Its function is as follows. Catalyzes the phosphorolysis of diverse nucleosides, yielding D-ribose 1-phosphate and the respective free bases. Can use uridine, adenosine, guanosine, cytidine, thymidine, inosine and xanthosine as substrates. Also catalyzes the reverse reactions. This is Pyrimidine/purine nucleoside phosphorylase from Shewanella baltica (strain OS195).